The following is a 422-amino-acid chain: Phosphoserine aminotransferase 2, chloroplastic (422 aa).

The transit peptide at 1-50 directs the protein to the chloroplast; sequence MAASTNSFLIGNQTQIPSLKPKSISQSFIHFTKPNTINLTTRTKSVSIRC. At A51 the chain carries N-acetylalanine. R101 contributes to the L-glutamate binding site. Pyridoxal 5'-phosphate contacts are provided by residues 135-136, W161, T211, D233, and Q256; that span reads AT. Residue K257 is modified to N6-(pyridoxal phosphate)lysine. A pyridoxal 5'-phosphate-binding site is contributed by 298 to 299; the sequence is NT.

This sequence belongs to the class-V pyridoxal-phosphate-dependent aminotransferase family. SerC subfamily. It depends on pyridoxal 5'-phosphate as a cofactor.

Its subcellular location is the plastid. The protein resides in the chloroplast. The enzyme catalyses O-phospho-L-serine + 2-oxoglutarate = 3-phosphooxypyruvate + L-glutamate. It carries out the reaction 4-(phosphooxy)-L-threonine + 2-oxoglutarate = (R)-3-hydroxy-2-oxo-4-phosphooxybutanoate + L-glutamate. It functions in the pathway amino-acid biosynthesis; L-serine biosynthesis; L-serine from 3-phospho-D-glycerate: step 2/3. Involved in the plastidial phosphorylated pathway of serine biosynthesis (PPSB). Catalyzes the reversible conversion of 3-phosphohydroxypyruvate to phosphoserine. The sequence is that of Phosphoserine aminotransferase 2, chloroplastic (PSAT2) from Arabidopsis thaliana (Mouse-ear cress).